Consider the following 572-residue polypeptide: Alpha-1D adrenergic receptor (572 aa).

The interval Met-1 to Ala-77 is disordered. The Extracellular segment spans residues Met-1–Gln-95. Composition is skewed to gly residues over residues Ser-23–Gly-33 and Ala-42–Ser-61. 2 N-linked (GlcNAc...) asparagine glycosylation sites follow: Asn-65 and Asn-82. A helical transmembrane segment spans residues Gly-96–Val-121. The Cytoplasmic portion of the chain corresponds to Ala-122–Tyr-133. Residues Phe-134–Leu-159 traverse the membrane as a helical segment. Topologically, residues Gly-160–Cys-169 are extracellular. A helical membrane pass occupies residues Asp-170 to Val-192. At Asp-193–Ala-213 the chain is on the cytoplasmic side. A helical transmembrane segment spans residues Ala-214–Pro-238. Topologically, residues Val-239–Glu-251 are extracellular. Residues Ala-252–Cys-275 traverse the membrane as a helical segment. Over Arg-276–Lys-348 the chain is Cytoplasmic. A helical membrane pass occupies residues Thr-349–Leu-373. Residues Phe-374–Ser-380 are Extracellular-facing. A helical transmembrane segment spans residues Glu-381 to Ser-405. Residues Ser-406–Ile-572 lie on the Cytoplasmic side of the membrane. Cys-419 carries S-palmitoyl cysteine lipidation. The interval Gly-444–Arg-488 is disordered. Low complexity predominate over residues Ala-450–Pro-468.

Belongs to the G-protein coupled receptor 1 family. Adrenergic receptor subfamily. ADRA1D sub-subfamily. As to quaternary structure, interacts with FLNA (via filamin repeat 21); increases PKA-mediated phosphorylation of FLNA. Palmitoylated. Palmitoylation by ZDHHC21 may increase the expression of the receptor and regulate downstream signaling.

The protein resides in the cell membrane. Its function is as follows. This alpha-adrenergic receptor mediates its effect through the influx of extracellular calcium. The chain is Alpha-1D adrenergic receptor (ADRA1D) from Homo sapiens (Human).